Reading from the N-terminus, the 539-residue chain is Tyrosine-protein kinase csk-1 (539 aa).

The 68-residue stretch at Ser43–Gly110 folds into the SH3 domain. Residues Pro129–His148 form a disordered region. The segment covering Ala131 to Ala146 has biased composition (low complexity). The region spanning Trp151 to Ile241 is the SH2 domain. The Protein kinase domain occupies Ile283–Ile535. Residues Ile289–Val297 and Lys310 each bind ATP. The Proton acceptor role is filled by Asp403.

The protein belongs to the protein kinase superfamily. Tyr protein kinase family. CSK subfamily. Requires Mg(2+) as cofactor. The cofactor is Mn(2+). As to expression, expressed predominantly in pharyngeal muscles in procorpus, metacorpus and terminal bulb. Expressed also in some neurons (ASE, ADF, AVA, AUA, RMDV and BAG) in the head region, anchor cell, vulva, cells around anus, body wall muscle and gondal distal tip cells.

The enzyme catalyses L-tyrosyl-[protein] + ATP = O-phospho-L-tyrosyl-[protein] + ADP + H(+). Its function is as follows. Non-receptor tyrosine-protein kinase which plays a role in pharynx function by regulating pumping and the orientation of pharyngeal muscle fibers, independently of src-1 and src-2. May phosphorylate and thereby negatively regulate src-1 and src-2 activities. This is Tyrosine-protein kinase csk-1 from Caenorhabditis elegans.